A 440-amino-acid chain; its full sequence is Beta-1,3-galactosyl-O-glycosyl-glycoprotein beta-1,6-N-acetylglucosaminyltransferase (440 aa).

Residues 1-9 (MKMAGWKKK) lie on the Cytoplasmic side of the membrane. A helical; Signal-anchor for type II membrane protein transmembrane segment spans residues 10-30 (LCPGHHLWALGCYMLLAVVSL). The Lumenal portion of the chain corresponds to 31 to 440 (RLSLRFKCDV…RHKAIYGTEL (410 aa)). Residues N72 and N108 are each glycosylated (N-linked (GlcNAc...) asparagine; by host). Disulfide bonds link C73–C230, C164–C384, C185–C212, and C393–C425.

It belongs to the glycosyltransferase 14 family.

The protein localises to the host Golgi apparatus membrane. It catalyses the reaction a 3-O-[beta-D-galactosyl-(1-&gt;3)-N-acetyl-alpha-D-galactosaminyl]-L-seryl-[protein] + UDP-N-acetyl-alpha-D-glucosamine = 3-O-{beta-D-galactosyl-(1-&gt;3)-[N-acetyl-beta-D-glucosaminyl-(1-&gt;6)]-N-acetyl-alpha-D-galactosaminyl}-L-seryl-[protein] + UDP + H(+). The enzyme catalyses a 3-O-[beta-D-galactosyl-(1-&gt;3)-N-acetyl-alpha-D-galactosaminyl]-L-threonyl-[protein] + UDP-N-acetyl-alpha-D-glucosamine = a 3-O-{beta-D-galactosyl-(1-&gt;3)-[N-acetyl-beta-D-glucosaminyl-(1-&gt;6)]-N-acetyl-alpha-D-galactosaminyl}-L-threonyl-[protein] + UDP + H(+). The catalysed reaction is a beta-D-Gal-(1-&gt;4)-beta-D-GlcNAc-(1-&gt;3)-beta-D-Gal-(1-&gt;4)-beta-D-GlcNAc derivative + UDP-N-acetyl-alpha-D-glucosamine = a beta-D-Gal-(1-&gt;4)-beta-D-GlcNAc-(1-&gt;3)-[beta-D-GlcNAc-(1-&gt;6)]-beta-D-Gal-(1-&gt;4)-N-acetyl-beta-D-glucosaminyl derivative + UDP + H(+). It carries out the reaction 3-O-[N-acetyl-beta-D-glucosaminyl-(1-&gt;3)-N-acetyl-alpha-D-galactosaminyl]-L-seryl-[protein] + UDP-N-acetyl-alpha-D-glucosamine = 3-O-[N-acetyl-beta-D-glucosaminyl-(1-&gt;3)-[N-acetyl-beta-D-glucosaminyl-(1-&gt;6)]-N-acetyl-alpha-D-galactosaminyl]-L-seryl-[protein] + UDP + H(+). It catalyses the reaction a 3-O-[N-acetyl-beta-D-glucosaminyl-(1-&gt;3)-N-acetyl-alpha-D-galactosaminyl]-L-threonyl-[protein] + UDP-N-acetyl-alpha-D-glucosamine = 3-O-[N-acetyl-beta-D-glucosaminyl-(1-&gt;3)-[N-acetyl-beta-D-glucosaminyl-(1-&gt;6)]-N-acetyl-alpha-D-galactosaminyl]-L-threonyl-[protein] + UDP + H(+). It functions in the pathway protein modification; protein glycosylation. In terms of biological role, non-essential glycosyltransferase that can synthesize all known mucin beta 6 N-acetylglucosaminides. Mediates core 2 and core 4 O-glycan branching, 2 important steps in mucin-type biosynthesis. Has also I-branching enzyme activity by converting linear into branched poly-N-acetyllactosaminoglycans. Contributes to the post-translational modifications of structural proteins. The polypeptide is Beta-1,3-galactosyl-O-glycosyl-glycoprotein beta-1,6-N-acetylglucosaminyltransferase (Bo17) (Bovine herpesvirus 4 (strain LVR140) (BoHV-4)).